We begin with the raw amino-acid sequence, 209 residues long: Large ribosomal subunit protein uL3 (209 aa).

This sequence belongs to the universal ribosomal protein uL3 family. In terms of assembly, part of the 50S ribosomal subunit. Forms a cluster with proteins L14 and L19.

One of the primary rRNA binding proteins, it binds directly near the 3'-end of the 23S rRNA, where it nucleates assembly of the 50S subunit. The sequence is that of Large ribosomal subunit protein uL3 from Nitratidesulfovibrio vulgaris (strain ATCC 29579 / DSM 644 / CCUG 34227 / NCIMB 8303 / VKM B-1760 / Hildenborough) (Desulfovibrio vulgaris).